The primary structure comprises 307 residues: Glycine--tRNA ligase alpha subunit (307 aa).

This sequence belongs to the class-II aminoacyl-tRNA synthetase family. As to quaternary structure, tetramer of two alpha and two beta subunits.

The protein resides in the cytoplasm. It carries out the reaction tRNA(Gly) + glycine + ATP = glycyl-tRNA(Gly) + AMP + diphosphate. The protein is Glycine--tRNA ligase alpha subunit (glyQ) of Xylella fastidiosa (strain 9a5c).